The sequence spans 261 residues: Probable trans-aconitate 2-methyltransferase (261 aa).

Belongs to the methyltransferase superfamily. Tam family.

It localises to the cytoplasm. It carries out the reaction trans-aconitate + S-adenosyl-L-methionine = (E)-3-(methoxycarbonyl)pent-2-enedioate + S-adenosyl-L-homocysteine. Functionally, catalyzes the S-adenosylmethionine monomethyl esterification of trans-aconitate. In Mycobacterium bovis (strain ATCC BAA-935 / AF2122/97), this protein is Probable trans-aconitate 2-methyltransferase.